The following is a 192-amino-acid chain: Orotate phosphoribosyltransferase (192 aa).

A 5-phospho-alpha-D-ribose 1-diphosphate-binding site is contributed by 116-124; that stretch reads EDIVTTGLS. T120 and R148 together coordinate orotate.

This sequence belongs to the purine/pyrimidine phosphoribosyltransferase family. PyrE subfamily. As to quaternary structure, homodimer. It depends on Mg(2+) as a cofactor.

The enzyme catalyses orotidine 5'-phosphate + diphosphate = orotate + 5-phospho-alpha-D-ribose 1-diphosphate. The protein operates within pyrimidine metabolism; UMP biosynthesis via de novo pathway; UMP from orotate: step 1/2. Its function is as follows. Catalyzes the transfer of a ribosyl phosphate group from 5-phosphoribose 1-diphosphate to orotate, leading to the formation of orotidine monophosphate (OMP). The protein is Orotate phosphoribosyltransferase of Bartonella henselae (strain ATCC 49882 / DSM 28221 / CCUG 30454 / Houston 1) (Rochalimaea henselae).